The following is a 127-amino-acid chain: DNA-directed RNA polymerases I, II, and III subunit RPABC2 (127 aa).

The span at Met-1 to Gly-32 shows a compositional bias: acidic residues. The disordered stretch occupies residues Met-1–Ile-52. Ser-2 carries the post-translational modification N-acetylserine. Ser-2 is subject to Phosphoserine; by CK2.

Belongs to the archaeal Rpo6/eukaryotic RPB6 RNA polymerase subunit family. Component of the RNA polymerase I (Pol I), RNA polymerase II (Pol II) and RNA polymerase III (Pol III) complexes consisting of at least 13, 12 and 17 subunits, respectively. Pol I complex consists of a ten-subunit catalytic core composed of POLR1A/RPA1, POLR1B/RPA2, POLR1C/RPAC1, POLR1D/RPAC2, POLR1H/RPA12, POLR2E/RPABC1, POLR2F/RPABC2, POLR2H/RPABC3, POLR2K/RPABC4 and POLR2L/RPABC5; a mobile stalk subunit POLR1F/RPA43 protruding from the core and additional subunits homologous to general transcription factors POLR1E/RPA49 and POLR1G/RPA34. Part of Pol I pre-initiation complex (PIC), in which Pol I core assembles with RRN3 and promoter-bound UTBF and SL1/TIF-IB complex. Pol II complex contains a ten-subunit catalytic core composed of POLR2A/RPB1, POLR2B/RPB2, POLR2C/RPB3, POLR2I/RPB9, POLR2J/RPB11, POLR2E/RPABC1, POLR2F/RPABC2, POLR2H/RPABC3, POLR2K/RPABC4 and POLR2L/RPABC5 and a mobile stalk composed of two subunits POLR2D/RPB4 and POLR2G/RPB7. Part of Pol II(G) complex, in which Pol II core associates with an additional subunit POLR2M; unlike conventional Pol II, Pol II(G) functions as a transcriptional repressor. Part of TBP-based Pol II pre-initiation complex (PIC), in which Pol II core assembles with general transcription factors and other specific initiation factors including GTF2E1, GTF2E2, GTF2F1, GTF2F2, TCEA1, ERCC2, ERCC3, GTF2H2, GTF2H3, GTF2H4, GTF2H5, GTF2A1, GTF2A2, GTF2B and TBP; this large multi-subunit PIC complex mediates DNA unwinding and targets Pol II core to the transcription start site where the first phosphodiester bond forms. Pol III complex consists of a ten-subunit catalytic core composed of POLR3A/RPC1, POLR3B/RPC2, POLR1C/RPAC1, POLR1D/RPAC2, POLR3K/RPC10, POLR2E/RPABC1, POLR2F/RPABC2, POLR2H/RPABC3, POLR2K/RPABC4 and POLR2L/RPABC5; a mobile stalk composed of two subunits POLR3H/RPC8 and CRCP/RPC9, protruding from the core and functioning primarily in transcription initiation; and additional subunits homologous to general transcription factors of the RNA polymerase II machinery, POLR3C/RPC3-POLR3F/RPC6-POLR3G/RPC7 heterotrimer required for transcription initiation and POLR3D/RPC4-POLR3E/RPC5 heterodimer involved in both transcription initiation and termination.

It is found in the nucleus. The protein resides in the nucleolus. In terms of biological role, DNA-dependent RNA polymerase catalyzes the transcription of DNA into RNA using the four ribonucleoside triphosphates as substrates. Common component of RNA polymerases I, II, and III which synthesize ribosomal RNA precursors, mRNA precursors and many functional non-coding RNAs, and small RNAs, such as 5S rRNA and tRNAs, respectively. Pol II is the central component of the basal RNA polymerase II transcription machinery. Pols are composed of mobile elements that move relative to each other. In Pol II, POLR2F/RPABC2 is part of the clamp element and together with parts of POLR2A/RPB1 and POLR2B/RPB2 forms a pocket to which the POLR2D/RPB4-POLR2G/RPB7 subcomplex binds. In Bos taurus (Bovine), this protein is DNA-directed RNA polymerases I, II, and III subunit RPABC2 (POLR2F).